Reading from the N-terminus, the 843-residue chain is Speckle targeted PIP5K1A-regulated poly(A) polymerase (843 aa).

A Matrin-type zinc finger spans residues Phe25–Glu55. One can recognise an RRM domain in the interval Glu54–Ser126. Residues Pro134 to Gly146 are compositionally biased toward basic residues. Residues Pro134 to Glu157 form a disordered region. Ser215 contributes to the ATP binding site. Mg(2+)-binding residues include Asp226 and Asp228. Residues Asp226 and Asp228 each contribute to the UTP site. Residues Val241–Ser255 show a composition bias toward basic and acidic residues. The tract at residues Val241–Leu292 is disordered. Asn354 is an ATP binding site. Asn354, Arg376, Tyr398, and His516 together coordinate UTP. The region spanning Ser456–His516 is the PAP-associated domain. Positions Pro564–Gln837 are KA1; binds the bulging loops of U6 snRNA but is dispensable for terminal uridylyltransferase activity. A disordered region spans residues Gln653–Thr691. A compositionally biased stretch (basic and acidic residues) spans Glu658–Glu670.

This sequence belongs to the DNA polymerase type-B-like family. Associates with the cleavage and polyadenylation specificity factor (CPSF) complex. The cofactor is Mg(2+). Mn(2+) serves as cofactor.

Its subcellular location is the nucleus. It localises to the nucleolus. It is found in the nucleus speckle. It carries out the reaction RNA(n) + UTP = RNA(n)-3'-uridine ribonucleotide + diphosphate. The catalysed reaction is RNA(n) + ATP = RNA(n)-3'-adenine ribonucleotide + diphosphate. Poly(A) polymerase that creates the 3'-poly(A) tail of specific pre-mRNAs. In addition to polyadenylation, it is also required for the 3'-end cleavage of pre-mRNAs: binds to the 3'UTR of targeted pre-mRNAs and promotes the recruitment and assembly of the CPSF complex on the 3'UTR of pre-mRNAs. In addition to adenylyltransferase activity, also has uridylyltransferase activity. However, the ATP ratio is higher than UTP in cells, suggesting that it functions primarily as a poly(A) polymerase. This Xenopus tropicalis (Western clawed frog) protein is Speckle targeted PIP5K1A-regulated poly(A) polymerase (tut1).